We begin with the raw amino-acid sequence, 110 residues long: MKKALQVAMFSLFTVIGFNAQANEHHHETMSEAQPQVISATGVVKGIDLESKKITIHHDPIAAVNWPEMTMRFTITPQTKMSEIKTGDKVAFNFVQQGNLSLLQDIKVSQ.

Residues 1–21 (MKKALQVAMFSLFTVIGFNAQ) form the signal peptide.

As to quaternary structure, the cus efflux system is composed of CusA, CusB, CusC and CusF. Interacts with copper-exporting P-type ATPase CopA; when this protein is precharged with copper it binds very little CopA.

The protein resides in the periplasm. In terms of biological role, part of a cation efflux system that mediates resistance to copper and silver. Binds one copper per polypeptide. This chain is Cation efflux system protein CusF (cusF), found in Escherichia coli (strain K12).